A 332-amino-acid chain; its full sequence is 2,3-diketo-L-gulonate reductase (332 aa).

Catalysis depends on histidine 44, which acts as the Proton donor. NAD(+) is bound by residues 168–174 (ITMVDMS), 224–225 (WK), and 304–306 (GHE).

This sequence belongs to the LDH2/MDH2 oxidoreductase family. DlgD subfamily. In terms of assembly, homodimer.

It is found in the cytoplasm. It catalyses the reaction 3-dehydro-L-gulonate + NAD(+) = 2,3-dioxo-L-gulonate + NADH + H(+). The catalysed reaction is 3-dehydro-L-gulonate + NADP(+) = 2,3-dioxo-L-gulonate + NADPH + H(+). Functionally, catalyzes the reduction of 2,3-diketo-L-gulonate in the presence of NADH, to form 3-keto-L-gulonate. The protein is 2,3-diketo-L-gulonate reductase of Escherichia coli O6:K15:H31 (strain 536 / UPEC).